Here is a 283-residue protein sequence, read N- to C-terminus: Thymidylate synthase (283 aa).

R22 serves as a coordination point for dUMP. C160 functions as the Nucleophile in the catalytic mechanism. DUMP contacts are provided by residues 180–183, N191, and 221–223; these read RSCD and HIY. D183 is a (6R)-5,10-methylene-5,6,7,8-tetrahydrofolate binding site. S282 lines the (6R)-5,10-methylene-5,6,7,8-tetrahydrofolate pocket.

Belongs to the thymidylate synthase family. Bacterial-type ThyA subfamily. As to quaternary structure, homodimer.

The protein resides in the cytoplasm. It carries out the reaction dUMP + (6R)-5,10-methylene-5,6,7,8-tetrahydrofolate = 7,8-dihydrofolate + dTMP. The protein operates within pyrimidine metabolism; dTTP biosynthesis. Functionally, catalyzes the reductive methylation of 2'-deoxyuridine-5'-monophosphate (dUMP) to 2'-deoxythymidine-5'-monophosphate (dTMP) while utilizing 5,10-methylenetetrahydrofolate (mTHF) as the methyl donor and reductant in the reaction, yielding dihydrofolate (DHF) as a by-product. This enzymatic reaction provides an intracellular de novo source of dTMP, an essential precursor for DNA biosynthesis. The polypeptide is Thymidylate synthase (Haemophilus influenzae (strain ATCC 51907 / DSM 11121 / KW20 / Rd)).